The chain runs to 289 residues: uncharacterized protein (289 aa).

This is an uncharacterized protein from Dictyostelium discoideum (Social amoeba).